Consider the following 629-residue polypeptide: uncharacterized protein (629 aa).

At methionine 1 the chain carries N-acetylmethionine. Positions 308 to 395 (VDPEPEPDPP…PGRRSRARNA (88 aa)) are disordered. Residues 322 to 334 (SANEPASQPNSRS) are compositionally biased toward polar residues. One can recognise a VWFA domain in the interval 451-587 (LVIFVVDASG…VAEGAAAVVV (137 aa)).

The protein belongs to the Mg-chelatase subunits D/I family.

This is an uncharacterized protein from Mycobacterium tuberculosis (strain ATCC 25618 / H37Rv).